The primary structure comprises 30 residues: Rothein 3.3 (30 aa).

The residue at position 30 (L30) is a Leucine amide.

Expressed by the skin dorsal glands.

It localises to the secreted. Lacks antimicrobial activity. Does not inhibit the formation of NO by neuronal nitric oxide. The polypeptide is Rothein 3.3 (Litoria rothii (Roth's tree frog)).